The sequence spans 88 residues: UPF0297 protein YrzL (88 aa).

It belongs to the UPF0297 family.

The sequence is that of UPF0297 protein YrzL (yrzL) from Bacillus subtilis (strain 168).